The primary structure comprises 317 residues: DNA-directed RNA polymerase subunit alpha (317 aa).

Residues 1 to 230 (MIEIEMEKPK…EHLNLFITLT (230 aa)) form an alpha N-terminal domain (alpha-NTD) region. Positions 247-317 (KEKVLEMTIE…LGLGLRPSDE (71 aa)) are alpha C-terminal domain (alpha-CTD).

The protein belongs to the RNA polymerase alpha chain family. In terms of assembly, homodimer. The RNAP catalytic core consists of 2 alpha, 1 beta, 1 beta' and 1 omega subunit. When a sigma factor is associated with the core the holoenzyme is formed, which can initiate transcription.

It carries out the reaction RNA(n) + a ribonucleoside 5'-triphosphate = RNA(n+1) + diphosphate. In terms of biological role, DNA-dependent RNA polymerase catalyzes the transcription of DNA into RNA using the four ribonucleoside triphosphates as substrates. The protein is DNA-directed RNA polymerase subunit alpha of Alkaliphilus oremlandii (strain OhILAs) (Clostridium oremlandii (strain OhILAs)).